We begin with the raw amino-acid sequence, 286 residues long: ATP-binding protein ChvD (286 aa).

In terms of domain architecture, ABC transporter spans 21–85 (KLQDMIDSQN…DLLLLDEPTN (65 aa)).

It belongs to the ABC transporter superfamily.

In terms of biological role, the induction of virG by growth under acidic conditions and by phosphate starvation, in the absence of plant inducers, is influenced by ChvD. This chain is ATP-binding protein ChvD (chvD), found in Rhizobium radiobacter (Agrobacterium tumefaciens).